The following is a 749-amino-acid chain: Transcription factor RFX3 (749 aa).

A DNA-binding region (RFX-type winged-helix) is located at residues 183 to 258 (HLQWLLDNYE…YHYYGIRVKP (76 aa)).

It belongs to the RFX family.

It localises to the nucleus. In terms of biological role, transcription factor required for ciliogenesis and islet cell differentiation during endocrine pancreas development. This Xenopus tropicalis (Western clawed frog) protein is Transcription factor RFX3 (rfx3).